We begin with the raw amino-acid sequence, 337 residues long: Ketol-acid reductoisomerase (NADP(+)) (337 aa).

In terms of domain architecture, KARI N-terminal Rossmann spans 3 to 183 (VEMFYDDDAD…GGTRAGVIKT (181 aa)). Residues 26 to 29 (YGSQ), Ser52, Ser54, and 84 to 87 (DTAQ) each bind NADP(+). Residue His109 is part of the active site. Gly135 provides a ligand contact to NADP(+). The KARI C-terminal knotted domain occupies 184–329 (TFKEETETDL…AKLRGLMSWV (146 aa)). Mg(2+)-binding residues include Asp192, Glu196, Glu228, and Glu232. Substrate is bound at residue Ser253.

The protein belongs to the ketol-acid reductoisomerase family. Mg(2+) is required as a cofactor.

The enzyme catalyses (2R)-2,3-dihydroxy-3-methylbutanoate + NADP(+) = (2S)-2-acetolactate + NADPH + H(+). It carries out the reaction (2R,3R)-2,3-dihydroxy-3-methylpentanoate + NADP(+) = (S)-2-ethyl-2-hydroxy-3-oxobutanoate + NADPH + H(+). It functions in the pathway amino-acid biosynthesis; L-isoleucine biosynthesis; L-isoleucine from 2-oxobutanoate: step 2/4. Its pathway is amino-acid biosynthesis; L-valine biosynthesis; L-valine from pyruvate: step 2/4. Functionally, involved in the biosynthesis of branched-chain amino acids (BCAA). Catalyzes an alkyl-migration followed by a ketol-acid reduction of (S)-2-acetolactate (S2AL) to yield (R)-2,3-dihydroxy-isovalerate. In the isomerase reaction, S2AL is rearranged via a Mg-dependent methyl migration to produce 3-hydroxy-3-methyl-2-ketobutyrate (HMKB). In the reductase reaction, this 2-ketoacid undergoes a metal-dependent reduction by NADPH to yield (R)-2,3-dihydroxy-isovalerate. The protein is Ketol-acid reductoisomerase (NADP(+)) of Nocardia farcinica (strain IFM 10152).